The sequence spans 249 residues: tRNA pseudouridine synthase A (249 aa).

Catalysis depends on aspartate 53, which acts as the Nucleophile. Tyrosine 111 contributes to the substrate binding site.

Belongs to the tRNA pseudouridine synthase TruA family. As to quaternary structure, homodimer.

The enzyme catalyses uridine(38/39/40) in tRNA = pseudouridine(38/39/40) in tRNA. Its function is as follows. Formation of pseudouridine at positions 38, 39 and 40 in the anticodon stem and loop of transfer RNAs. The protein is tRNA pseudouridine synthase A of Streptococcus pneumoniae serotype 2 (strain D39 / NCTC 7466).